The sequence spans 435 residues: Sex peptide receptor (435 aa).

Residues M1 to G93 lie on the Extracellular side of the membrane. The helical transmembrane segment at Y94–L114 threads the bilayer. Residues S115–N124 are Cytoplasmic-facing. A helical transmembrane segment spans residues F125–L145. The Extracellular segment spans residues W146–S168. Residues I169–L189 traverse the membrane as a helical segment. Residues A190–R211 lie on the Cytoplasmic side of the membrane. Residues V212–P229 traverse the membrane as a helical segment. The Extracellular portion of the chain corresponds to R230–R276. A helical membrane pass occupies residues V277–A297. Residues A298 to T327 lie on the Cytoplasmic side of the membrane. The helical transmembrane segment at T328–V348 threads the bilayer. Residues T349–N368 are Extracellular-facing. The helical transmembrane segment at I369–Y389 threads the bilayer. Topologically, residues C390 to L435 are cytoplasmic.

The protein belongs to the G-protein coupled receptor 1 family. As to expression, in the female, expressed in the reproductive organs; strongly expressed in the spermathecae and the lower oviduct. No expression in the male reproductive organs. In the central nervous system of both sexes, it is expressed in the brain and ventral nerve cord (VNC); strongly expressed in the ventral regions of the suboesophageal ganglion, the cervical connective and in many nerve roots of the brain and VNC. Expressed in the s-LNvs and l-LNvs pdf neurons (at protein level).

Its subcellular location is the cell membrane. Its function is as follows. Receptor for two functionally unrelated ligands; SP (A70A) for controlling reproductive behaviors and MIP for controlling sleep behavior. MIP-SPR pathway functions as a sleep homeostat which perceives the need for sleep and stabilizes it by providing a slow-acting inhibitory input to the fly arousal system that involve the pigment dispersing factor (pdf) neurons. SP-SPR is one of the multiple SP pathways that induce female post-mating behavioral responses (PMR) such as the suppression of mating receptivity and initiation of egg laying. The PMR switch is achieved by mediating the synaptic output of neurons such as those expressing fruitless (fru), double sex (dsx) and pickpocket (ppk). This is Sex peptide receptor from Drosophila melanogaster (Fruit fly).